The sequence spans 295 residues: 4-diphosphocytidyl-2-C-methyl-D-erythritol kinase (295 aa).

Lysine 22 is a catalytic residue. 106–116 is a binding site for ATP; the sequence is PAGGGFGGGSS. Aspartate 148 is an active-site residue.

It belongs to the GHMP kinase family. IspE subfamily.

The catalysed reaction is 4-CDP-2-C-methyl-D-erythritol + ATP = 4-CDP-2-C-methyl-D-erythritol 2-phosphate + ADP + H(+). It functions in the pathway isoprenoid biosynthesis; isopentenyl diphosphate biosynthesis via DXP pathway; isopentenyl diphosphate from 1-deoxy-D-xylulose 5-phosphate: step 3/6. Functionally, catalyzes the phosphorylation of the position 2 hydroxy group of 4-diphosphocytidyl-2C-methyl-D-erythritol. This Xanthomonas oryzae pv. oryzae (strain MAFF 311018) protein is 4-diphosphocytidyl-2-C-methyl-D-erythritol kinase.